We begin with the raw amino-acid sequence, 485 residues long: WAS/WASL-interacting protein family member 3 (485 aa).

Residues 1-30 (MPVPPPPPPPLPPPPPPLGAPPPPPPPGPP) show a composition bias toward pro residues. Residues 1 to 485 (MPVPPPPPPP…NSQLSLKALR (485 aa)) are disordered. 3 short sequence motifs (profilin-binding motif) span residues 3–8 (VPPPPP), 11–16 (LPPPPP), and 20–25 (APPPPP). The WH2 domain occupies 45-62 (GRSALLADIQQGTRLRKV). At Arg46 the chain carries Asymmetric dimethylarginine. Positions 58–61 (RLRK) match the RLRK motif. Residues 63 to 78 (TQINDRSAPQIESSKG) are compositionally biased toward polar residues. Phosphoserine is present on Ser150. Pro residues-rich tracts occupy residues 165–200 (PVPPRPSVPAPPPPTTPPPPPPPPPPPPPPPLPPAS) and 207–243 (VSPPVPPTKGNPSAVPAPIPCVPPLPPPPPTPPPLPP). Ser208 bears the Phosphoserine mark. Residues 244 to 259 (ASALSEKAVRPQLAPL) show a composition bias toward low complexity. Composition is skewed to pro residues over residues 260 to 275 (HLPPIPPPLPLLPPYG) and 293 to 312 (PPAPPPPPPPPPPPPPPPLP). Phosphoserine is present on Ser394. Polar residues predominate over residues 396 to 407 (TTELSSKTQQPG). A compositionally biased stretch (basic and acidic residues) spans 417–441 (VIDDFESKFTFHSMEDFPPPDEYKP). The WASP-binding motif motif lies at 426 to 450 (TFHSMEDFPPPDEYKPGQKIYPSKV). Residues 475-485 (RNSQLSLKALR) are compositionally biased toward polar residues.

The protein belongs to the verprolin family. In terms of assembly, isoform 1 interacts with WASL (via WH1 domain), and monomeric and filamentous actin. In terms of tissue distribution, detected mainly in brain and at lower levels in heart and lung (at protein level). Also detected in testis but not in kidney, liver or spleen.

Its subcellular location is the cytoplasm. Functionally, may have a role in spermatogenesis. May be a regulator of cytoskeletal organization. The polypeptide is WAS/WASL-interacting protein family member 3 (Wipf3) (Rattus norvegicus (Rat)).